Consider the following 1232-residue polypeptide: MGKKMMTTDGNTATAHVAYAMSEVAAIYPITPSSTMGEEADDWAAQGRKNIFGQTLTIREMQSEAGAAGAVHGALAAGALTTTFTASQGLLLMIPNMYKISGELLPGVFHVTARAIAAHALSIFGDHQDIYAARQTGFAMLASSSVQEAHDMALVAHLAAIESNVPFMHFFDGFRTSHEIQKIEVLDYADMASLVNQKALAEFRAKSMNPEHPHVRGTAQNPDIYFQGREAANPYYLKVPGIVAEYMQKVASLTGRSYKLFDYVGAPDAERVIVSMGSSCETIEEVINHLAAKGEKIGLIKVRLYRPFVSEAFFAALPASAKVITVLDRTKEPGAPGDPLYLDVCSAFVERGEAMPKILAGRYGLGSKEFSPAMVKSVYDNMSGAKKNHFTVGIEDDVTGTSLPVDNAFADTTPKGTIQCQFWGLGADGTVGANKQAIKIIGDNTDLFAQGYFSYDSKKSGGITISHLRFGEKPIQSTYLVNRADYVACHNPAYVGIYDILEGIKDGGTFVLNSPWSSLEDMDKHLPSGIKRTIANKKLKFYNIDAVKIATDVGLGGRINMIMQTAFFKLAGVLPFEKAVDLLKKSIHKAYGKKGEKIVKMNTDAVDQAVTSLQEFKYPDSWKDAPAETKAEPMTNEFFKNVVKPILTQQGDKLPVSAFEADGRFPLGTSQFEKRGVAINVPQWVPENCIQCNQCAFVCPHSAILPVLAKEEELVGAPANFTALEAKGKELKGYKFRIQINTLDCMGCGNCADICPPKEKALVMQPLDTQRDAQVPNLEYAARIPVKSEVLPRDSLKGSQFQEPLMEFSGACSGCGETPYVRVITQLFGERMFIANATGCSSIWGASAPSMPYKTNRLGQGPAWGNSLFEDAAEYGFGMNMSMFARRTHLADLAAKALESDASGDVKEALQGWLAGKNDPIKSKEYGDKLKKLLAGQKDGLLGQIAAMSDLYTKKSVWIFGGDGWAYDIGYGGLDHVLASGEDVNVFVMDTEVYSNTGGQSSKATPTGAVAKFAAAGKRTGKKDLARMVMTYGYVYVATVSMGYSKQQFLKVLKEAESFPGPSLVIAYATCINQGLRKGMGKSQDVMNTAVKSGYWPLFRYDPRLAAQGKNPFQLDSKAPDGSVEEFLMAQNRFAVLDRSFPEDAKRLRAQVAHELDVRFKELEHMAATNIFESFAPAGGKADGSVDFGEGAEFCTRDDTPMMARPDSGEACDQNRAGTSEQQGDLSKRTKK.

T31 contacts pyruvate. E64 provides a ligand contact to thiamine diphosphate. Pyruvate is bound at residue R114. CoA-binding positions include 427 to 431 (ADGTV), K459, N560, and N602. 2 consecutive 4Fe-4S ferredoxin-type domains span residues 680 to 709 (NVPQ…PVLA) and 736 to 767 (FRIQ…MQPL). [4Fe-4S] cluster contacts are provided by C689, C692, C695, C699, C745, C748, C751, C755, C812, and C815. Thiamine diphosphate is bound by residues E817, C840, and 962 to 965 (GDGW). C840 lines the [4Fe-4S] cluster pocket. D963 lines the Mg(2+) pocket. Positions 983 and 985 each coordinate Ca(2+). Residues T991 and V993 each coordinate Mg(2+). 991-996 (TEVYSN) is a thiamine diphosphate binding site. Positions 1056, 1059, 1061, and 1063 each coordinate Ca(2+). C1071 contributes to the [4Fe-4S] cluster binding site. C1195 and C1212 are joined by a disulfide. The interval 1197-1232 (RDDTPMMARPDSGEACDQNRAGTSEQQGDLSKRTKK) is disordered. Polar residues predominate over residues 1216 to 1225 (RAGTSEQQGD).

Belongs to the pyruvate:ferredoxin/flavodoxin oxidoreductase family. In terms of assembly, homodimer. The cofactor is [4Fe-4S] cluster. Thiamine diphosphate is required as a cofactor. Mg(2+) serves as cofactor.

The protein localises to the cytoplasm. The catalysed reaction is 2 oxidized [2Fe-2S]-[ferredoxin] + pyruvate + CoA = 2 reduced [2Fe-2S]-[ferredoxin] + acetyl-CoA + CO2 + H(+). Its function is as follows. Catalyzes the ferredoxin-dependent oxidative decarboxylation of pyruvate. Required for the transfer of electrons from pyruvate to ferredoxin. Ferredoxin I and ferredoxin II, which are single 4Fe-4S cluster ferredoxins are the most effective electron carriers of POR. In Desulfocurvibacter africanus (Desulfovibrio africanus), this protein is Pyruvate:ferredoxin oxidoreductase.